Here is a 309-residue protein sequence, read N- to C-terminus: tRNA dimethylallyltransferase (309 aa).

Residue 11–18 (GPTASGKS) participates in ATP binding. Residue 13–18 (TASGKS) coordinates substrate. Interaction with substrate tRNA regions lie at residues 36–39 (DSMQ) and 160–164 (QRLLR).

Belongs to the IPP transferase family. As to quaternary structure, monomer. Mg(2+) serves as cofactor.

It catalyses the reaction adenosine(37) in tRNA + dimethylallyl diphosphate = N(6)-dimethylallyladenosine(37) in tRNA + diphosphate. In terms of biological role, catalyzes the transfer of a dimethylallyl group onto the adenine at position 37 in tRNAs that read codons beginning with uridine, leading to the formation of N6-(dimethylallyl)adenosine (i(6)A). The polypeptide is tRNA dimethylallyltransferase (Caulobacter sp. (strain K31)).